The primary structure comprises 780 residues: MSSYRGSTRPRKRTREGENYGFRPHRGNSQELLAARIKKDITFLADPRGNSVAADDINYVAMSLSREANDPETISTILDCIQTTAFIIPVKIPHLATLIIRASLRVPLILEKAAAYFCLQYFTNLNSFLYYEAKVDLRMLICMSFALQPGTLKPLFSLLADAISKETKPSVWGDNFLRIILINLPYFIAANNDLGKKDFANEILDQCEIYVRHRKSSITLSNPLSIHDNLSEEELDLLYKQLILSRENDFTFPYISQPWKFFESDFVHIVPVSPSIPEWTFQPTPQQNELPSFKRFFELFNNFEIRTTPDASDVAASIFRDISVDVINHLEFNRVEAAQVLTDLDVYFTYKTFALRGTPVNELPNLDPSESRWKAEDIIVEAVLGELLGSQNTTYKPVYYHSLLIECCRIAPKILAPTFGRVIRLMYTMSSDLPLQTLDRFIDWFSHHLSNFNFHWKWNEWIPDVELDDLHPKKVFMRETITRELILSYYTRISDSLPEELRCLLGEQPSGPNFVYENETHPLYQQSSQIIEALRLHKPLEELDIILQSEEIQNSETSAVRLVMSCAYSLGSRSFSHALNVFEKHLNTLKHFSRKSLDSEIEVVDELFSFWKLQPFNAVMWLDKMLNYSIISITSIIEWLIKQDVTIWSRSYTWSLVNTTFNKLAARLRRSVSNKEDSSLINEANEEKEIVTNLLLSALRALISENAENIWVSHWLNLMLKYVESNFLSVKKDTIEEANEPVQENTSEEQEDTKMQPVDAVDEQPSENNQTAADATNEEK.

The segment at 1-25 (MSSYRGSTRPRKRTREGENYGFRPH) is disordered. Position 29 is a phosphoserine (Ser-29). The MIF4G domain occupies 34-249 (AARIKKDITF…KQLILSREND (216 aa)). The disordered stretch occupies residues 738 to 780 (ANEPVQENTSEEQEDTKMQPVDAVDEQPSENNQTAADATNEEK).

Belongs to the NCBP1 family. As to quaternary structure, component of the nuclear cap-binding complex (CBC), a heterodimer composed of cbc1 and cbc2 that interacts with capped RNAs.

The protein resides in the cytoplasm. Its subcellular location is the perinuclear region. The protein localises to the nucleus. Its function is as follows. Component of the CBC complex, which binds cotranscriptionally to the 5'-cap of pre-mRNAs and is involved in maturation, export and degradation of nuclear mRNAs. The chain is Nuclear cap-binding protein subunit 1 (cbc1) from Schizosaccharomyces pombe (strain 972 / ATCC 24843) (Fission yeast).